A 1403-amino-acid polypeptide reads, in one-letter code: Nidogen-2 (1403 aa).

Residues 1–30 form the signal peptide; that stretch reads MFRDPTAGWLTPPSPLSLLVMLLLLSRVGA. One can recognise an NIDO domain in the interval 108-274; the sequence is PFLADIDTSH…GVWAFHIGSR (167 aa). Residues 323-403 form a disordered region; that stretch reads EDVEYPPVEP…KQGRPVGEGE (81 aa). 2 O-linked (Xyl...) (chondroitin sulfate) serine glycosylation sites follow: Ser386 and Ser475. Polar residues predominate over residues 386-395; that stretch reads SASLDPQTKQ. The EGF-like 1 domain maps to 507 to 547; the sequence is NLETCEHSHGRCSQHAFCTDYTTGFCCHCQSRFYGNGKHCL. Disulfide bonds link Cys511–Cys524, Cys518–Cys533, and Cys535–Cys546. The region spanning 551–781 is the Nidogen G2 beta-barrel domain; sequence APHRVNGKVS…GPVEVDSAPV (231 aa). Asn681, Asn716, and Asn726 each carry an N-linked (GlcNAc...) asparagine glycan. The 42-residue stretch at 782–823 folds into the EGF-like 2 domain; that stretch reads GVNPCYDGSHTCDTTARCHPGTGVDYTCECTPGFQGDGRSCV. Cystine bridges form between Cys786–Cys799, Cys793–Cys809, Cys811–Cys822, Cys828–Cys841, Cys835–Cys850, Cys852–Cys865, Cys875–Cys890, Cys882–Cys900, Cys902–Cys913, Cys919–Cys930, Cys924–Cys939, Cys941–Cys952, Cys968–Cys991, Cys1002–Cys1009, Cys1011–Cys1033, Cys1047–Cys1071, Cys1082–Cys1089, and Cys1091–Cys1112. The EGF-like 3; calcium-binding domain occupies 824-862; sequence DVNECATGFHRCGPNSVCVNLVGSYRCECRSGYEFADDQ. The 44-residue stretch at 871 to 914 folds into the EGF-like 4 domain; that stretch reads PPNPCLDGSHTCAPEGQARCIHHGGSSFSCACLPGFIGTGHQCS. The region spanning 915-953 is the EGF-like 5; calcium-binding domain; it reads DVDECAENRCHEAAICYNTPGSFSCRCQPGYRGDGFHCT. The Cell attachment site motif lies at 946–948; it reads RGD. Thyroglobulin type-1 domains lie at 965 to 1033 and 1044 to 1112; these read LKPC…PPHC and RTVC…RPAC. Positions 1021–1043 are disordered; the sequence is GTQTPPGSTPPHCGPPPEPTQRP. The span at 1027-1040 shows a compositional bias: pro residues; the sequence is GSTPPHCGPPPEPT. A glycan (N-linked (GlcNAc...) asparagine) is linked at Asn1152. LDL-receptor class B repeat units follow at residues 1182–1225, 1226–1268, 1269–1313, 1314–1355, and 1357–1401; these read RMVY…DHFR, RTMY…DPIR, GNLY…DPFS, KLLC…YADH, and YHTD…CPTG. Arg1336 carries the omega-N-methylarginine modification.

Interacts with LAMA2. Interacts with COL13A1. Interacts with EFEMP2. Post-translationally, highly N- and O-glycosylated.

The protein resides in the secreted. Its subcellular location is the extracellular space. It localises to the extracellular matrix. It is found in the basement membrane. Functionally, cell adhesion glycoprotein. Might be involved in osteoblast differentiation. It probably has a role in cell-extracellular matrix interactions. The polypeptide is Nidogen-2 (Nid2) (Mus musculus (Mouse)).